The following is a 116-amino-acid chain: Ribosome-binding factor A (116 aa).

This sequence belongs to the RbfA family. In terms of assembly, monomer. Binds 30S ribosomal subunits, but not 50S ribosomal subunits or 70S ribosomes.

Its subcellular location is the cytoplasm. Its function is as follows. One of several proteins that assist in the late maturation steps of the functional core of the 30S ribosomal subunit. Associates with free 30S ribosomal subunits (but not with 30S subunits that are part of 70S ribosomes or polysomes). Required for efficient processing of 16S rRNA. May interact with the 5'-terminal helix region of 16S rRNA. In Streptococcus equi subsp. zooepidemicus (strain H70), this protein is Ribosome-binding factor A.